A 98-amino-acid chain; its full sequence is Pore-forming peptide amoebapore A (98 aa).

The signal sequence occupies residues 1-21 (MKAIVFVLIFAVAFAVTATHQ). In terms of domain architecture, Saposin B-type spans 22–98 (GEILCNLCTG…NAICAKIHAC (77 aa)). 3 cysteine pairs are disulfide-bonded: C26-C98, C29-C92, and C56-C67.

Monomer (at pH below 4 and pH above 6). Homodimer (at pH 4-6). Hexamer; formed during insertion in the membrane.

The protein localises to the cytoplasmic granule. Forms pores in the cell membrane of host cells. Has antibacterial activity against M.luteus, no activity against E.coli. Implicated in the cytolytic activity of the parasite. The protein is Pore-forming peptide amoebapore A of Entamoeba histolytica (strain ATCC 30459 / HM-1:IMSS / ABRM).